Consider the following 209-residue polypeptide: Methylated-DNA--protein-cysteine methyltransferase (209 aa).

Residue cysteine 5 coordinates Zn(2+). Serine 14 carries the post-translational modification Phosphoserine. Residues cysteine 24, histidine 29, and histidine 89 each contribute to the Zn(2+) site. Positions 99, 118, 119, 127, and 132 each coordinate DNA. Cysteine 149 acts as the Nucleophile; methyl group acceptor in catalysis. Serine 155 provides a ligand contact to DNA.

Belongs to the MGMT family. The cofactor is Zn(2+).

Its subcellular location is the nucleus. The enzyme catalyses a 6-O-methyl-2'-deoxyguanosine in DNA + L-cysteinyl-[protein] = S-methyl-L-cysteinyl-[protein] + a 2'-deoxyguanosine in DNA. It catalyses the reaction a 4-O-methyl-thymidine in DNA + L-cysteinyl-[protein] = a thymidine in DNA + S-methyl-L-cysteinyl-[protein]. Its function is as follows. Involved in the cellular defense against the biological effects of O6-methylguanine (O6-MeG) and O4-methylthymine (O4-MeT) in DNA. Repairs the methylated nucleobase in DNA by stoichiometrically transferring the methyl group to a cysteine residue in the enzyme. This is a suicide reaction: the enzyme is irreversibly inactivated. The sequence is that of Methylated-DNA--protein-cysteine methyltransferase (Mgmt) from Rattus norvegicus (Rat).